The chain runs to 345 residues: Protein RecA (345 aa).

Gly65 to Thr72 lines the ATP pocket.

Belongs to the RecA family.

The protein resides in the cytoplasm. In terms of biological role, can catalyze the hydrolysis of ATP in the presence of single-stranded DNA, the ATP-dependent uptake of single-stranded DNA by duplex DNA, and the ATP-dependent hybridization of homologous single-stranded DNAs. It interacts with LexA causing its activation and leading to its autocatalytic cleavage. The chain is Protein RecA from Sulfurimonas denitrificans (strain ATCC 33889 / DSM 1251) (Thiomicrospira denitrificans (strain ATCC 33889 / DSM 1251)).